The sequence spans 281 residues: Formamidopyrimidine-DNA glycosylase (281 aa).

The Schiff-base intermediate with DNA role is filled by proline 2. Glutamate 3 functions as the Proton donor in the catalytic mechanism. The active-site Proton donor; for beta-elimination activity is lysine 58. DNA-binding residues include histidine 100, arginine 119, and arginine 160. The segment at 245–281 adopts an FPG-type zinc-finger fold; sequence RVYGREGAPCPTPGCTGTVQRIVQSGRSSFFCPLCQQ. The active-site Proton donor; for delta-elimination activity is arginine 271.

The protein belongs to the FPG family. In terms of assembly, monomer. Zn(2+) is required as a cofactor.

The enzyme catalyses Hydrolysis of DNA containing ring-opened 7-methylguanine residues, releasing 2,6-diamino-4-hydroxy-5-(N-methyl)formamidopyrimidine.. It carries out the reaction 2'-deoxyribonucleotide-(2'-deoxyribose 5'-phosphate)-2'-deoxyribonucleotide-DNA = a 3'-end 2'-deoxyribonucleotide-(2,3-dehydro-2,3-deoxyribose 5'-phosphate)-DNA + a 5'-end 5'-phospho-2'-deoxyribonucleoside-DNA + H(+). Functionally, involved in base excision repair of DNA damaged by oxidation or by mutagenic agents. Acts as a DNA glycosylase that recognizes and removes damaged bases. Has a preference for oxidized purines, such as 7,8-dihydro-8-oxoguanine (8-oxoG). Has AP (apurinic/apyrimidinic) lyase activity and introduces nicks in the DNA strand. Cleaves the DNA backbone by beta-delta elimination to generate a single-strand break at the site of the removed base with both 3'- and 5'-phosphates. This chain is Formamidopyrimidine-DNA glycosylase, found in Paracoccus denitrificans (strain Pd 1222).